Here is a 365-residue protein sequence, read N- to C-terminus: Serpentine receptor class epsilon-38 (365 aa).

7 helical membrane passes run 26–46, 65–85, 124–144, 168–188, 196–216, 256–276, and 285–305; these read GMYL…GVII, IMTA…LLII, ALVI…FGIL, IPVF…YFVL, LGTS…LAVW, LVIV…CLVI, and IFIH…CSTL.

It belongs to the nematode receptor-like protein sre family.

Its subcellular location is the membrane. The polypeptide is Serpentine receptor class epsilon-38 (sre-38) (Caenorhabditis elegans).